We begin with the raw amino-acid sequence, 571 residues long: Urease subunit alpha (571 aa).

A Urease domain is found at Gly-133 to Phe-571. Residues His-138, His-140, and Lys-221 each contribute to the Ni(2+) site. Lys-221 is subject to N6-carboxylysine. Residue His-223 coordinates substrate. The Ni(2+) site is built by His-250 and His-276. Residue His-324 is the Proton donor of the active site. Ni(2+) is bound at residue Asp-364.

The protein belongs to the metallo-dependent hydrolases superfamily. Urease alpha subunit family. Heterotrimer of UreA (gamma), UreB (beta) and UreC (alpha) subunits. Three heterotrimers associate to form the active enzyme. Requires Ni cation as cofactor. In terms of processing, carboxylation allows a single lysine to coordinate two nickel ions.

It localises to the cytoplasm. The catalysed reaction is urea + 2 H2O + H(+) = hydrogencarbonate + 2 NH4(+). It participates in nitrogen metabolism; urea degradation; CO(2) and NH(3) from urea (urease route): step 1/1. This chain is Urease subunit alpha, found in Corynebacterium efficiens (strain DSM 44549 / YS-314 / AJ 12310 / JCM 11189 / NBRC 100395).